Here is a 424-residue protein sequence, read N- to C-terminus: MNKARAIARWISFLLLIAAGQVCAELQVQISQGVEGAIPVAVVPFANQGSLSDSLSQIVSADLQRSGRFRTLAESAMQERPTAPDQVQQAAWQALGQDFVVVGQIRPSGDGYEADFHVVDVIRGTLVVSYRLPFGRAETRQAAHRIADVIYKAITGEPGAFATRVAYVSVSGEGANRRYNLQVADTDGYNPQSVIVSNEPIMSPAWSPDGTKIAYVSFESRRSAIYVQTLATGERRKVSDAPGINGAPAFSPDGSRLALTLSKDGNPDIYVMNLGSGGLTRITDYSGIDTEPNWSRDGRSIVFTSDRGGKPQLYLVSASGGPAERLTYEGDYNARGVFSPDGRSLAMVHGKGGDYRIAVMDLASRAVRVLTSGPLDESPGFAPNGSMILYAARRGQLAAVSIDGKVRQSLRIEGGAVREPAWSP.

An N-terminal signal peptide occupies residues 1–24 (MNKARAIARWISFLLLIAAGQVCA).

This sequence belongs to the TolB family. The Tol-Pal system is composed of five core proteins: the inner membrane proteins TolA, TolQ and TolR, the periplasmic protein TolB and the outer membrane protein Pal. They form a network linking the inner and outer membranes and the peptidoglycan layer.

The protein resides in the periplasm. Part of the Tol-Pal system, which plays a role in outer membrane invagination during cell division and is important for maintaining outer membrane integrity. This Methylococcus capsulatus (strain ATCC 33009 / NCIMB 11132 / Bath) protein is Tol-Pal system protein TolB.